A 768-amino-acid chain; its full sequence is DNA replication licensing factor MCM3 homolog 1 (768 aa).

The region spanning 290–497 (TFDLLGNSLA…IDRQISEHVA (208 aa)) is the MCM domain. 340-347 (GDPSVAKS) provides a ligand contact to ATP. The short motif at 472–475 (SRFD) is the Arginine finger element. The tract at residues 662 to 687 (MKQQAEHDAGATGGTVDGHGSSGNDP) is disordered. Residues 672–682 (ATGGTVDGHGS) are compositionally biased toward gly residues.

It belongs to the MCM family.

It localises to the nucleus. The enzyme catalyses ATP + H2O = ADP + phosphate + H(+). Acts as a factor that allows the DNA to undergo a single round of replication per cell cycle. Required for DNA replication and cell proliferation. May act as a component of the MCM complex which is the putative replicative helicase of the replication licensing system in eukaryotic cells. The protein is DNA replication licensing factor MCM3 homolog 1 (ROA1) of Zea mays (Maize).